Here is a 452-residue protein sequence, read N- to C-terminus: tRNA modification GTPase MnmE (452 aa).

Positions 21, 78, and 118 each coordinate (6S)-5-formyl-5,6,7,8-tetrahydrofolate. The region spanning 214–375 (GMKVVIAGRP…LREHLKQAMG (162 aa)) is the TrmE-type G domain. A K(+)-binding site is contributed by N224. Residues 224–229 (NAGKSS), 243–249 (TDIAGTT), and 268–271 (DTAG) contribute to the GTP site. S228 contributes to the Mg(2+) binding site. T243, I245, and T248 together coordinate K(+). T249 serves as a coordination point for Mg(2+). Position 452 (K452) interacts with (6S)-5-formyl-5,6,7,8-tetrahydrofolate.

It belongs to the TRAFAC class TrmE-Era-EngA-EngB-Septin-like GTPase superfamily. TrmE GTPase family. As to quaternary structure, homodimer. Heterotetramer of two MnmE and two MnmG subunits. K(+) is required as a cofactor.

Its subcellular location is the cytoplasm. Functionally, exhibits a very high intrinsic GTPase hydrolysis rate. Involved in the addition of a carboxymethylaminomethyl (cmnm) group at the wobble position (U34) of certain tRNAs, forming tRNA-cmnm(5)s(2)U34. This chain is tRNA modification GTPase MnmE, found in Haemophilus influenzae (strain PittEE).